The sequence spans 109 residues: MKVLVIIALCLVAFQSALSKKIENFESYIEDLKSEARECIPLYNDCTAFKYNNNCCKDPEKKYQYKCSCIVCKEGKEQCTCQRKETVESMMKCVRFVKKVGEKVIEKVG.

Positions 1–19 are cleaved as a signal peptide; the sequence is MKVLVIIALCLVAFQSALS. Residues 20-37 constitute a propeptide, removed in mature form; that stretch reads KKIENFESYIEDLKSEAR. A Processing quadruplet motif motif is present at residues 34–37; the sequence is SEAR. 5 disulfide bridges follow: C39-C56, C46-C67, C55-C81, C69-C79, and C72-C93. Residue V108 is modified to Valine amide.

This sequence belongs to the neurotoxin 19 (CSTX) family. 11 (latartoxin) subfamily. Post-translationally, contains 5 disulfide bonds. Cleavage of the propeptide depends on the processing quadruplet motif (XXXR, with at least one of X being E). As to expression, expressed by the venom gland.

It localises to the secreted. In terms of biological role, insect toxin. Causes paralysis in larvae of C.vicina by depolarizing membranes at the neuromuscular junction. The sequence is that of Latartoxin-2a from Lachesana tarabaevi (Spider).